The following is a 992-amino-acid chain: Ribosome quality control complex subunit NEMF homolog (992 aa).

The span at 214 to 231 (KETTEETPEAEDKPEKGG) shows a compositional bias: basic and acidic residues. The segment at 214–245 (KETTEETPEAEDKPEKGGKKQRKKQQNTKLEQ) is disordered. Coiled-coil stretches lie at residues 331–370 (STQESQKIDMKTLQQEREALKKLSNVKNDHAKRLEELTKV) and 481–514 (SAAQKEKKTVDASQKALKSAERKTQQTLKEVRTI). Disordered stretches follow at residues 688–715 (EVEHDLLSDNEDADSNINLSEPSSNTEI) and 771–895 (GPSR…GDVD). Residues 702–715 (SNINLSEPSSNTEI) show a composition bias toward polar residues. Residues 774–839 (RKKQVSAKKT…QDDEEREIRM (66 aa)) adopt a coiled-coil conformation. The span at 782–796 (KTKEDKARAKQEAAK) shows a compositional bias: basic and acidic residues. Positions 814–825 (RGQKGKLKKMKQ) are enriched in basic residues. A compositionally biased stretch (basic and acidic residues) spans 845–874 (SGKEKPQASADKVVEKSESTKEYVKPEKSA).

Belongs to the NEMF family. In terms of assembly, component of the ribosome quality control complex (RQC), composed of at least the E3 ubiquitin ligase l(3)76BDr/LTN1 and Clbn/NEMF associated with the 60S ribosomal subunit. The complex probably also contains TCF25 as well as TER94/VCP and its ubiquitin-binding cofactors. Interacts (via its C-terminus) with pros (via its homeobox). Interacts (via its N-terminus) with emb. As to expression, expressed in enterocytes (at protein level).

The protein resides in the nucleus. Its subcellular location is the cytoplasm. The protein localises to the mitochondrion outer membrane. Its function is as follows. Key component of the ribosome quality control complex (RQC), a ribosome-associated complex that mediates the extraction of incompletely synthesized nascent chains from stalled ribosomes as well as their ubiquitin-mediated proteasomal degradation. Thereby, frees 60S subunit ribosomes from the stalled translation complex and prevents the accumulation of nascent polypeptide chains that are potentially toxic for the cell. Within the RQC complex, Clbn/NEMF specifically binds stalled 60S ribosomal subunits by recognizing an exposed, nascent chain-conjugated tRNA moiety. Following binding to stalled 60S ribosomal subunits, Clbn/NEMF mediates CAT tailing by recruiting alanine-charged tRNA to the A-site and directing the elongation of stalled nascent chains independently of mRNA or 40S subunits, leading to non-templated C-terminal alanine extensions (CAT tails). On mitochondrial surface, plays a role in mitochondrial-stress induced translational termination impairment and protein carboxyl terminal extension (MISTERMINATE). Plays a role in regulating nuclear transport possibly through directly binding to both emb and cargo proteins. Plays a role in the regulation of G1-to-S cell cycle transition. Regulates S phase checkpoint by antagonizing E2F1 activity. Together with hid and tefu/ATM, plays a role in DNA damage-induced apoptosis through both p53-dependent and -independent activity. Plays an essential role in the regulation of mitochondrial structure and redox state in enterocytes which is essential for the control of intestinal stem cells proliferation and intestinal homeostasis. This is Ribosome quality control complex subunit NEMF homolog from Drosophila melanogaster (Fruit fly).